The primary structure comprises 783 residues: RNA exonuclease 5 (783 aa).

Residues 230–378 (LFGLDCEMCL…EDARTTLELA (149 aa)) form the Exonuclease domain. RRM domains are found at residues 503–577 (STVY…RPVT) and 598–677 (GTIY…RHLH).

In Bos taurus (Bovine), this protein is RNA exonuclease 5 (REXO5).